Consider the following 284-residue polypeptide: Aspartate dehydrogenase domain-containing protein (284 aa).

It belongs to the L-aspartate dehydrogenase family.

This is Aspartate dehydrogenase domain-containing protein (aspdh) from Xenopus tropicalis (Western clawed frog).